A 273-amino-acid chain; its full sequence is Dermonecrotic toxin LdSicTox-alphaIB3aiv (273 aa).

His-5 is an active-site residue. Residues Glu-25 and Asp-27 each contribute to the Mg(2+) site. The active-site Nucleophile is His-41. 2 cysteine pairs are disulfide-bonded: Cys-45-Cys-51 and Cys-47-Cys-190. A Mg(2+)-binding site is contributed by Asp-85.

It belongs to the arthropod phospholipase D family. Class II subfamily. Mg(2+) serves as cofactor. As to expression, expressed by the venom gland.

Its subcellular location is the secreted. The catalysed reaction is an N-(acyl)-sphingosylphosphocholine = an N-(acyl)-sphingosyl-1,3-cyclic phosphate + choline. The enzyme catalyses an N-(acyl)-sphingosylphosphoethanolamine = an N-(acyl)-sphingosyl-1,3-cyclic phosphate + ethanolamine. It catalyses the reaction a 1-acyl-sn-glycero-3-phosphocholine = a 1-acyl-sn-glycero-2,3-cyclic phosphate + choline. It carries out the reaction a 1-acyl-sn-glycero-3-phosphoethanolamine = a 1-acyl-sn-glycero-2,3-cyclic phosphate + ethanolamine. In terms of biological role, dermonecrotic toxins cleave the phosphodiester linkage between the phosphate and headgroup of certain phospholipids (sphingolipid and lysolipid substrates), forming an alcohol (often choline) and a cyclic phosphate. This toxin acts on sphingomyelin (SM). It may also act on ceramide phosphoethanolamine (CPE), lysophosphatidylcholine (LPC) and lysophosphatidylethanolamine (LPE), but not on lysophosphatidylserine (LPS), and lysophosphatidylglycerol (LPG). It acts by transphosphatidylation, releasing exclusively cyclic phosphate products as second products. Induces dermonecrosis, hemolysis, increased vascular permeability, edema, inflammatory response, and platelet aggregation. The chain is Dermonecrotic toxin LdSicTox-alphaIB3aiv from Loxosceles deserta (Desert recluse spider).